Consider the following 443-residue polypeptide: Serine--tRNA ligase (443 aa).

Threonine 250 to glutamate 252 serves as a coordination point for L-serine. Residue arginine 281–glutamate 283 coordinates ATP. L-serine is bound at residue glutamate 304. Glutamate 368 to serine 371 is an ATP binding site. Serine 403 serves as a coordination point for L-serine.

It belongs to the class-II aminoacyl-tRNA synthetase family. Type-1 seryl-tRNA synthetase subfamily. Homodimer. The tRNA molecule binds across the dimer.

It localises to the cytoplasm. The catalysed reaction is tRNA(Ser) + L-serine + ATP = L-seryl-tRNA(Ser) + AMP + diphosphate + H(+). The enzyme catalyses tRNA(Sec) + L-serine + ATP = L-seryl-tRNA(Sec) + AMP + diphosphate + H(+). It functions in the pathway aminoacyl-tRNA biosynthesis; selenocysteinyl-tRNA(Sec) biosynthesis; L-seryl-tRNA(Sec) from L-serine and tRNA(Sec): step 1/1. Functionally, catalyzes the attachment of serine to tRNA(Ser). Is also able to aminoacylate tRNA(Sec) with serine, to form the misacylated tRNA L-seryl-tRNA(Sec), which will be further converted into selenocysteinyl-tRNA(Sec). The chain is Serine--tRNA ligase from Variovorax paradoxus (strain S110).